A 459-amino-acid chain; its full sequence is Chromosomal replication initiator protein DnaA (459 aa).

The segment at 1–90 (MAVSLWQQCI…RPASKPAAPA (90 aa)) is domain I, interacts with DnaA modulators. The interval 75–124 (RFDIGSRPASKPAAPAASTKSPVAPAAKSPSKPSFNSNEPAATANHRSNM) is disordered. Residues 80–108 (SRPASKPAAPAASTKSPVAPAAKSPSKPS) are compositionally biased toward low complexity. Residues 91 to 122 (ASTKSPVAPAAKSPSKPSFNSNEPAATANHRS) form a domain II region. Over residues 109-124 (FNSNEPAATANHRSNM) the composition is skewed to polar residues. Residues 123–339 (NMNPTYQFDN…GALNRVIANA (217 aa)) form a domain III, AAA+ region region. ATP contacts are provided by G167, G169, K170, and T171. Residues 340 to 459 (NFTGRPITID…YANLIRTLSS (120 aa)) are domain IV, binds dsDNA.

This sequence belongs to the DnaA family. As to quaternary structure, oligomerizes as a right-handed, spiral filament on DNA at oriC.

The protein resides in the cytoplasm. In terms of biological role, plays an essential role in the initiation and regulation of chromosomal replication. ATP-DnaA binds to the origin of replication (oriC) to initiate formation of the DNA replication initiation complex once per cell cycle. Binds the DnaA box (a 9 base pair repeat at the origin) and separates the double-stranded (ds)DNA. Forms a right-handed helical filament on oriC DNA; dsDNA binds to the exterior of the filament while single-stranded (ss)DNA is stabiized in the filament's interior. The ATP-DnaA-oriC complex binds and stabilizes one strand of the AT-rich DNA unwinding element (DUE), permitting loading of DNA polymerase. After initiation quickly degrades to an ADP-DnaA complex that is not apt for DNA replication. Binds acidic phospholipids. This chain is Chromosomal replication initiator protein DnaA, found in Shewanella loihica (strain ATCC BAA-1088 / PV-4).